Consider the following 501-residue polypeptide: MDITVFLSLTVVVFLAVIIFYGRNEERKRMLQKIPGAPSLPLIGTALPILYRRKEDRMTWIEEILEKYKPLILWYFGNRPFVNISSPELIEVVLRNTQLIDKAFLYDLFHSWLGTGLLTSSGAKWHQHRKIITPTFHFSILEGFITIFAEKSEILVRKLQKEVGRGPFFIRQYVSNCALDIICETAMGTSVNAQDEGFSEYVTAINKMTDVLSDRMANPLLYPEFIFKLTPYYWTHKKCLKVLNGFVNKIIQERKEERKKSKVTQTSEDADIGKKKRVPFLDTLLDASEDDNKLTDTDILEEVHTFMFEGHDTVSAAMTWLLFELGHHPEIQEEAYKEVQDIFQGSDRVPTMADLNNMNYLERVIKESLRLHPSVIYFVREAHQDFELGGYTIPAGTNIDFSVPFIHRNPEIFPNPRCFNPDNFLPDRVVNRHPYAYIPFSAGPRNCIGQRFALLEEKVVLSYLLRHYRFRTVNKREDSKFKLEMINTPVKPIQLIIEARN.

Glu309 and Cys447 together coordinate heme.

The protein belongs to the cytochrome P450 family. The cofactor is heme.

It localises to the endoplasmic reticulum membrane. It is found in the microsome membrane. The enzyme catalyses an organic molecule + reduced [NADPH--hemoprotein reductase] + O2 = an alcohol + oxidized [NADPH--hemoprotein reductase] + H2O + H(+). This chain is Cytochrome P450 4c21 (CYP4C21), found in Blattella germanica (German cockroach).